We begin with the raw amino-acid sequence, 710 residues long: uncharacterized protein (710 aa).

2 coiled-coil regions span residues 273–298 (LYRQ…MEEG) and 477–528 (RYEK…VADT).

This is an uncharacterized protein from Coxiella burnetii (strain RSA 493 / Nine Mile phase I).